The primary structure comprises 406 residues: Arginine biosynthesis bifunctional protein ArgJ (406 aa).

Substrate-binding residues include Thr152, Lys179, Thr190, Glu277, Asn401, and Ser406. Thr190 acts as the Nucleophile in catalysis.

This sequence belongs to the ArgJ family. In terms of assembly, heterotetramer of two alpha and two beta chains.

Its subcellular location is the cytoplasm. It catalyses the reaction N(2)-acetyl-L-ornithine + L-glutamate = N-acetyl-L-glutamate + L-ornithine. The enzyme catalyses L-glutamate + acetyl-CoA = N-acetyl-L-glutamate + CoA + H(+). Its pathway is amino-acid biosynthesis; L-arginine biosynthesis; L-ornithine and N-acetyl-L-glutamate from L-glutamate and N(2)-acetyl-L-ornithine (cyclic): step 1/1. The protein operates within amino-acid biosynthesis; L-arginine biosynthesis; N(2)-acetyl-L-ornithine from L-glutamate: step 1/4. Its function is as follows. Catalyzes two activities which are involved in the cyclic version of arginine biosynthesis: the synthesis of N-acetylglutamate from glutamate and acetyl-CoA as the acetyl donor, and of ornithine by transacetylation between N(2)-acetylornithine and glutamate. This chain is Arginine biosynthesis bifunctional protein ArgJ, found in Neisseria meningitidis serogroup A / serotype 4A (strain DSM 15465 / Z2491).